The sequence spans 244 residues: Mitophagy receptor atg43 (244 aa).

Positions 1–24 (MSSESKGIPIPRSDSNKTSDVSSW) are disordered. Residues 1–198 (MSSESKGIPI…LVALITLRDH (198 aa)) are Cytoplasmic-facing. The atg8 interacting motif (AIM) motif lies at 28-31 (YELI). The interval 105-131 (SLSLLQSKEEDDSSNWETEDSESAVEE) is disordered. Residues 113–131 (EEDDSSNWETEDSESAVEE) are compositionally biased toward acidic residues. Residues 165-184 (PPIPDLRFQQSYLQSIQRAN) form an involved in MIM complex binding. Required for normal vegetative cell population growth but is dispensable for mitophagy region. The chain crosses the membrane as a helical span at residues 199–215 (VLYPFLSGGMWVFVRHI). The Mitochondrial intermembrane segment spans residues 216 to 244 (FQFLKLQEKGFHFGQSLRRNLGLFSTFKD).

Interacts (via N-terminal atg8 interacting motif) with atg8; the interaction is direct. Interacts with the mitochondrial outer import machinery (MIM) complex subunits mim1 and mim2.

It is found in the mitochondrion outer membrane. In terms of biological role, mitophagy receptor that tethers atg8 to the mitochondrial outer membrane to promote selective autophagy. The sequence is that of Mitophagy receptor atg43 from Schizosaccharomyces pombe (strain 972 / ATCC 24843) (Fission yeast).